A 55-amino-acid chain; its full sequence is uncharacterized protein (55 aa).

This is an uncharacterized protein from Homo sapiens (Human).